The sequence spans 129 residues: Large ribosomal subunit protein bL12 (129 aa).

The protein belongs to the bacterial ribosomal protein bL12 family. In terms of assembly, homodimer. Part of the ribosomal stalk of the 50S ribosomal subunit. Forms a multimeric L10(L12)X complex, where L10 forms an elongated spine to which 2 to 4 L12 dimers bind in a sequential fashion. Binds GTP-bound translation factors.

Forms part of the ribosomal stalk which helps the ribosome interact with GTP-bound translation factors. Is thus essential for accurate translation. The protein is Large ribosomal subunit protein bL12 of Pelotomaculum thermopropionicum (strain DSM 13744 / JCM 10971 / SI).